The chain runs to 541 residues: Chaperonin GroEL (541 aa).

ATP contacts are provided by residues 29–32 (TLGP), 86–90 (DGTTT), Gly-413, 477–479 (DAL), and Asp-493.

It belongs to the chaperonin (HSP60) family. Forms a cylinder of 14 subunits composed of two heptameric rings stacked back-to-back. Interacts with the co-chaperonin GroES.

Its subcellular location is the cytoplasm. It catalyses the reaction ATP + H2O + a folded polypeptide = ADP + phosphate + an unfolded polypeptide.. Functionally, together with its co-chaperonin GroES, plays an essential role in assisting protein folding. The GroEL-GroES system forms a nano-cage that allows encapsulation of the non-native substrate proteins and provides a physical environment optimized to promote and accelerate protein folding. This is Chaperonin GroEL from Clostridium botulinum (strain 657 / Type Ba4).